The sequence spans 550 residues: Kinase suppressor of Ras B (550 aa).

2 stretches are compositionally biased toward low complexity: residues 21–56 and 63–75; these read SFSS…SNPI and ATSS…STSS. The disordered stretch occupies residues 21 to 87; it reads SFSSWRRSST…PPPASAPPRI (67 aa). The Phorbol-ester/DAG-type zinc-finger motif lies at 90 to 145; it reads YHKMVPSKSKFRQCDVCEHIFIFDFVRKQHLDDVYACNVCGIRVHKGCLDRVKNDC. A disordered region spans residues 172–196; it reads TTASISKSLTTSPTCSTSTTMSPAG. Low complexity predominate over residues 177 to 193; the sequence is SKSLTTSPTCSTSTTMS. The Protein kinase domain occupies 248–528; sequence VDVMTKIGDG…FQQIVKRITV (281 aa). Residues 530–550 form a disordered region; the sequence is MPRKESNKQKRRSTAHENPLF.

Belongs to the protein kinase superfamily. TKL Ser/Thr protein kinase family. In terms of assembly, interacts with ndk-1.

Its function is as follows. Probable inactive protein kinase which positively regulates Ras-mediated signaling probably acting at the level of let-60/ras or/and lin-45/raf. In the germline, regulates meiotic progression during oogenesis and mpk-1 (isoform b) phosphorylation. Plays a role in meiotic recombination events. Functions redundantly with ksr-1 in the Ras-mediated regulation of larval survival, the development of excretory canal, in determining vulval precursor cell fate during vulval induction and in mpk-1 phosphorylation in somatic cells. This Caenorhabditis elegans protein is Kinase suppressor of Ras B.